We begin with the raw amino-acid sequence, 372 residues long: GDSL esterase/lipase At1g54020 (372 aa).

A signal peptide spans 1-26 (MECSSVSVLGILLVFPLLHNLVTISG). Ser40 acts as the Nucleophile in catalysis. N-linked (GlcNAc...) asparagine glycosylation is found at Asn161 and Asn280. Residues Asp314 and His317 contribute to the active site.

The protein belongs to the 'GDSL' lipolytic enzyme family.

The protein resides in the secreted. This Arabidopsis thaliana (Mouse-ear cress) protein is GDSL esterase/lipase At1g54020.